A 79-amino-acid polypeptide reads, in one-letter code: Dolichyl-diphosphooligosaccharide--protein glycosyltransferase subunit TMEM258 (79 aa).

2 helical membrane passes run 17–37 (VFPHLTVVLLAIGMFFKAWFF) and 59–79 (VASLFMGFGVHFLLLWVGIFV).

Belongs to the OST5 family. In terms of assembly, component of the oligosaccharyltransferase (OST) complex.

It is found in the membrane. Its subcellular location is the endoplasmic reticulum. The protein localises to the cytoplasm. Its pathway is protein modification; protein glycosylation. Its function is as follows. Subunit of the oligosaccharyl transferase (OST) complex that catalyzes the initial transfer of a defined glycan (Glc(3)Man(9)GlcNAc(2) in eukaryotes) from the lipid carrier dolichol-pyrophosphate to an asparagine residue within an Asn-X-Ser/Thr consensus motif in nascent polypeptide chains, the first step in protein N-glycosylation. N-glycosylation occurs cotranslationally and the complex associates with the Sec61 complex at the channel-forming translocon complex that mediates protein translocation across the endoplasmic reticulum (ER). All subunits are required for a maximal enzyme activity. The sequence is that of Dolichyl-diphosphooligosaccharide--protein glycosyltransferase subunit TMEM258 from Danio rerio (Zebrafish).